We begin with the raw amino-acid sequence, 91 residues long: Dynein 8 kDa light chain, flagellar outer arm (91 aa).

It belongs to the dynein light chain family. Consists of at least 3 heavy chains (alpha, beta and gamma), 2 intermediate chains and 8 light chains.

The protein resides in the cytoplasm. It localises to the cytoskeleton. It is found in the flagellum axoneme. The sequence is that of Dynein 8 kDa light chain, flagellar outer arm from Chlamydomonas reinhardtii (Chlamydomonas smithii).